The primary structure comprises 538 residues: Cytochrome P450 monooxygenase cfoH (538 aa).

Residues 24–44 traverse the membrane as a helical segment; sequence VLTFFAILLVAILLWYMIPYF. Heme is bound at residue C471.

This sequence belongs to the cytochrome P450 family. Heme is required as a cofactor.

It localises to the membrane. The protein operates within secondary metabolite biosynthesis; flavonoid biosynthesis. Functionally, cytochrome P450 monooxygenase; part of the gene cluster that mediates the biosynthesis of chlorflavonin, a fungal flavonoid with acetolactate synthase inhibitory activity. Within the pathway, cfoH is responsible for the hydroxylation of the flavonoid skeleton at position C2'. The pathway begins with the PKS-NRPS hybrid synthetase cfoA that uses benzoic acid or p-hydroxybenzoic acid as a starter unit with four rounds of chain elongation using malonyl-CoA to form the chalcone skeleton. Then, a new type of chalcone isomerase, cfoK, catalyzes the conversion of the chalcone into a flavanone by a histidine-mediated oxa-Michael addition mechanism. The desaturation of flavanone to flavone is catalyzed by a new type of flavone synthase, the flavin mononucleotide (FMN)-dependent oxidoreductase cfoJ. Monooxygenases cfoF, cfoG, and P450 cfoH are responsible for the hydroxylation of the flavonoid skeleton at sites C3, C8, and C2', respectively. Like cfoF, the dehydratase cfoI plays also a role in the hydroxylation of position C3. Methyltransferases cfoB, cfoC, and cfoD then catalyze the methylation of C7-OH, C8-OH, and C3-OH, respectively. Finally, the monooxygenase cfoE is responsible for the chlorination of flavonoid at position C3'. The chain is Cytochrome P450 monooxygenase cfoH from Aspergillus candidus.